The primary structure comprises 339 residues: Putative zinc metalloprotease FN1322 (339 aa).

H17 contributes to the Zn(2+) binding site. E18 is an active-site residue. Residue H21 coordinates Zn(2+). The next 3 helical transmembrane spans lie at 88–110, 262–284, and 318–335; these read FIVL…FVTA, FGWI…LNLL, and GMIL…NDVW. The 84-residue stretch at 96–179 folds into the PDZ domain; sequence FMNFLMAFIL…ITALVERNGK (84 aa).

Belongs to the peptidase M50B family. The cofactor is Zn(2+).

The protein resides in the cell membrane. This Fusobacterium nucleatum subsp. nucleatum (strain ATCC 25586 / DSM 15643 / BCRC 10681 / CIP 101130 / JCM 8532 / KCTC 2640 / LMG 13131 / VPI 4355) protein is Putative zinc metalloprotease FN1322.